Here is a 115-residue protein sequence, read N- to C-terminus: Large ribosomal subunit protein bL19 (115 aa).

This sequence belongs to the bacterial ribosomal protein bL19 family.

Functionally, this protein is located at the 30S-50S ribosomal subunit interface and may play a role in the structure and function of the aminoacyl-tRNA binding site. This Bacillus velezensis (strain DSM 23117 / BGSC 10A6 / LMG 26770 / FZB42) (Bacillus amyloliquefaciens subsp. plantarum) protein is Large ribosomal subunit protein bL19.